A 355-amino-acid chain; its full sequence is Tetraspanin-10 (355 aa).

The disordered stretch occupies residues methionine 1–proline 33. Residues methionine 1–tyrosine 78 lie on the Cytoplasmic side of the membrane. Residues leucine 79–leucine 99 form a helical membrane-spanning segment. The Extracellular segment spans residues tryptophan 100–proline 120. Residues methionine 121 to glycine 141 traverse the membrane as a helical segment. The Cytoplasmic portion of the chain corresponds to alanine 142–serine 154. The chain crosses the membrane as a helical span at residues glycine 155–tryptophan 175. Residues glycine 176 to glycine 355 lie on the Extracellular side of the membrane. Cystine bridges form between cysteine 212–cysteine 279, cysteine 213–cysteine 243, cysteine 229–cysteine 237, and cysteine 244–cysteine 258. Residue asparagine 228 is glycosylated (N-linked (GlcNAc...) asparagine). The interval tyrosine 327–glycine 355 is disordered. The span at serine 341–glycine 355 shows a compositional bias: pro residues.

This sequence belongs to the tetraspanin (TM4SF) family. Interacts with ADAM10. Expressed in the eye, including iris, ciliary body, retinal pigment epithelium, but not lens (protein level).

Its subcellular location is the cell membrane. Functionally, part of TspanC8 subgroup, composed of 6 members that interact with the transmembrane metalloprotease ADAM10. This interaction is required for ADAM10 exit from the endoplasmic reticulum and for enzymatic maturation and trafficking to the cell surface as well as substrate specificity. Different TspanC8/ADAM10 complexes have distinct substrates. This chain is Tetraspanin-10, found in Homo sapiens (Human).